Reading from the N-terminus, the 1887-residue chain is DNA-directed RNA polymerase II subunit RPB1 (1887 aa).

Positions 67, 70, 77, 80, 107, 110, 150, and 176 each coordinate Zn(2+). The disordered stretch occupies residues 156 to 178 (MDLTKENQQPDPNKKPGHGGCGH). Positions 487, 489, and 491 each coordinate Mg(2+). The segment at 825 to 837 (PSEFYFHAMGGRE) is bridging helix. K1260 is covalently cross-linked (Glycyl lysine isopeptide (Lys-Gly) (interchain with G-Cter in ubiquitin)). 2 disordered regions span residues 1528–1565 (TPGG…GPSM) and 1579–1887 (YSPT…ESED). Low complexity-rich tracts occupy residues 1529 to 1565 (PGGP…GPSM), 1579 to 1610 (YSPT…PTSP), and 1626 to 1650 (PQST…PTVQ). Copy 1 of the repeat occupies 1579-1585 (YSPTSPN). The segment at 1579-1881 (YSPTSPNYTA…SPAYSPSSPT (303 aa)) is C-terminal domain (CTD); 32 X 7 AA approximate tandem repeats of Y-[ST]-P-[STNVAPGN]-[STGMA]-[PSTR]-[SNAGCQKTLRIMH]. The stretch at 1586 to 1592 (YTASSPG) is one 2; approximate repeat. 4 repeat units span residues 1598–1604 (YSPSSPN), 1605–1611 (YSPTSPL), 1631–1637 (YSPSSSG), and 1638–1644 (YSPTSPV). Positions 1651–1664 (FQSSPSFAGSGSNI) are enriched in polar residues. Low complexity predominate over residues 1665–1760 (YSPGNAYSPS…GVKYSPTSPT (96 aa)). 17 consecutive repeat copies span residues 1671 to 1677 (YSPSSSN), 1678 to 1684 (YSPNSPS), 1685 to 1691 (YSPTSPS), 1692 to 1698 (YSPSSPS), 1699 to 1705 (YSPTSPC), 1706 to 1712 (YSPTSPS), 1713 to 1719 (YSPTSPN), 1720 to 1726 (YTPVTPS), 1727 to 1733 (YSPTSPN), 1740 to 1746 (YSPASPA), 1754 to 1760 (YSPTSPT), 1761 to 1767 (YSPPSPS), 1777 to 1783 (YTPGSPQ), 1784 to 1790 (YSPASPK), 1791 to 1797 (YSPTSPL), 1798 to 1804 (YSPSSPQ), and 1811 to 1817 (YSPTGST). Residues 1776–1786 (QYTPGSPQYSP) are compositionally biased toward polar residues. A compositionally biased stretch (low complexity) spans 1788–1813 (SPKYSPTSPLYSPSSPQHSPSNQYSP). Polar residues predominate over residues 1814–1831 (TGSTYSATSPRYSPNMSI). One copy of the 24; approximate repeat lies at 1818-1824 (YSATSPR). 8 consecutive repeat copies span residues 1825–1831 (YSPNMSI), 1832–1838 (YSPSSTK), 1839–1845 (YSPTSPT), 1846–1852 (YTPTARN), 1853–1859 (YSPTSPM), 1860–1866 (YSPTAPS), 1868–1874 (YSPTSPA), and 1875–1881 (YSPSSPT). The segment covering 1832 to 1849 (YSPSSTKYSPTSPTYTPT) has biased composition (low complexity). Residues 1850–1859 (ARNYSPTSPM) are compositionally biased toward polar residues. Positions 1860–1881 (YSPTAPSHYSPTSPAYSPSSPT) are enriched in low complexity.

The protein belongs to the RNA polymerase beta' chain family. Component of the RNA polymerase II (Pol II) complex consisting of 12 subunits. Post-translationally, the tandem 7 residues repeats in the C-terminal domain (CTD) can be highly phosphorylated. The phosphorylation activates Pol II. Phosphorylation occurs mainly at residues 'Ser-2' and 'Ser-5' of the heptapeptide repeat. The phosphorylation state is believed to result from the balanced action of site-specific CTD kinases and phosphatase, and a 'CTD code' that specifies the position of Pol II within the transcription cycle has been proposed. In terms of processing, following transcription stress, the elongating form of RNA polymerase II (RNA pol IIo) is polyubiquitinated via 'Lys-63'-linkages on Lys-1260 at DNA damage sites without leading to degradation: ubiquitination promotes RNA pol IIo backtracking to allow access by the transcription-coupled nucleotide excision repair (TC-NER) machinery. Subsequent DEF1-dependent polyubiquitination by the elongin complex via 'Lys-48'-linkages may lead to proteasome-mediated degradation; presumably at stalled RNA pol II where TC-NER has failed, to halt global transcription and enable 'last resort' DNA repair pathways.

It localises to the nucleus. The enzyme catalyses RNA(n) + a ribonucleoside 5'-triphosphate = RNA(n+1) + diphosphate. Its function is as follows. DNA-dependent RNA polymerase catalyzes the transcription of DNA into RNA using the four ribonucleoside triphosphates as substrates. Largest and catalytic component of RNA polymerase II which synthesizes mRNA precursors and many functional non-coding RNAs. Forms the polymerase active center together with the second largest subunit. Pol II is the central component of the basal RNA polymerase II transcription machinery. It is composed of mobile elements that move relative to each other. RPB1 is part of the core element with the central large cleft, the clamp element that moves to open and close the cleft and the jaws that are thought to grab the incoming DNA template. At the start of transcription, a single-stranded DNA template strand of the promoter is positioned within the central active site cleft of Pol II. A bridging helix emanates from RPB1 and crosses the cleft near the catalytic site and is thought to promote translocation of Pol II by acting as a ratchet that moves the RNA-DNA hybrid through the active site by switching from straight to bent conformations at each step of nucleotide addition. During transcription elongation, Pol II moves on the template as the transcript elongates. Elongation is influenced by the phosphorylation status of the C-terminal domain (CTD) of Pol II largest subunit (RPB1), which serves as a platform for assembly of factors that regulate transcription initiation, elongation, termination and mRNA processing. The protein is DNA-directed RNA polymerase II subunit RPB1 of Drosophila melanogaster (Fruit fly).